We begin with the raw amino-acid sequence, 206 residues long: Small ribosomal subunit protein uS4 (206 aa).

Residues 96 to 156 (GRLDNVVYRM…EKAKKQARIK (61 aa)) enclose the S4 RNA-binding domain.

This sequence belongs to the universal ribosomal protein uS4 family. As to quaternary structure, part of the 30S ribosomal subunit. Contacts protein S5. The interaction surface between S4 and S5 is involved in control of translational fidelity.

Functionally, one of the primary rRNA binding proteins, it binds directly to 16S rRNA where it nucleates assembly of the body of the 30S subunit. In terms of biological role, with S5 and S12 plays an important role in translational accuracy. This Aeromonas salmonicida (strain A449) protein is Small ribosomal subunit protein uS4.